Consider the following 406-residue polypeptide: Bifunctional enzyme IspD/IspF (406 aa).

The 2-C-methyl-D-erythritol 4-phosphate cytidylyltransferase stretch occupies residues 1–247; it reads MSLIRVNGEA…TLFFNPAKDT (247 aa). Residues 248 to 406 form a 2-C-methyl-D-erythritol 2,4-cyclodiphosphate synthase region; the sequence is FIGMGFDTHA…HVSMRYKQKL (159 aa). Residues Asp254 and His256 each contribute to the a divalent metal cation site. Residues 254–256 and 280–281 contribute to the 4-CDP-2-C-methyl-D-erythritol 2-phosphate site; these read DTH and HS. A divalent metal cation is bound at residue His288. Residues 302–304, 307–311, 378–381, Phe385, and Lys388 contribute to the 4-CDP-2-C-methyl-D-erythritol 2-phosphate site; these read DIG, FPDND, and TTME.

In the N-terminal section; belongs to the IspD/TarI cytidylyltransferase family. IspD subfamily. It in the C-terminal section; belongs to the IspF family. A divalent metal cation is required as a cofactor.

It carries out the reaction 2-C-methyl-D-erythritol 4-phosphate + CTP + H(+) = 4-CDP-2-C-methyl-D-erythritol + diphosphate. The catalysed reaction is 4-CDP-2-C-methyl-D-erythritol 2-phosphate = 2-C-methyl-D-erythritol 2,4-cyclic diphosphate + CMP. It functions in the pathway isoprenoid biosynthesis; isopentenyl diphosphate biosynthesis via DXP pathway; isopentenyl diphosphate from 1-deoxy-D-xylulose 5-phosphate: step 2/6. Its pathway is isoprenoid biosynthesis; isopentenyl diphosphate biosynthesis via DXP pathway; isopentenyl diphosphate from 1-deoxy-D-xylulose 5-phosphate: step 4/6. In terms of biological role, bifunctional enzyme that catalyzes the formation of 4-diphosphocytidyl-2-C-methyl-D-erythritol from CTP and 2-C-methyl-D-erythritol 4-phosphate (MEP) (IspD), and catalyzes the conversion of 4-diphosphocytidyl-2-C-methyl-D-erythritol 2-phosphate (CDP-ME2P) to 2-C-methyl-D-erythritol 2,4-cyclodiphosphate (ME-CPP) with a corresponding release of cytidine 5-monophosphate (CMP) (IspF). In Helicobacter pylori (strain ATCC 700392 / 26695) (Campylobacter pylori), this protein is Bifunctional enzyme IspD/IspF.